The sequence spans 462 residues: tRNA-2-methylthio-N(6)-dimethylallyladenosine synthase (462 aa).

Positions 2 to 117 (KRYFIHTFGC…LPDIIGRVSA (116 aa)) constitute an MTTase N-terminal domain. [4Fe-4S] cluster-binding residues include cysteine 11, cysteine 47, cysteine 80, cysteine 157, cysteine 161, and cysteine 164. The 230-residue stretch at 143-372 (SRGKVTEFVT…QKLQRRISGE (230 aa)) folds into the Radical SAM core domain. The region spanning 375-437 (AALVGSEVEV…PNQLAGKQVA (63 aa)) is the TRAM domain.

It belongs to the methylthiotransferase family. MiaB subfamily. In terms of assembly, monomer. [4Fe-4S] cluster serves as cofactor.

It localises to the cytoplasm. It carries out the reaction N(6)-dimethylallyladenosine(37) in tRNA + (sulfur carrier)-SH + AH2 + 2 S-adenosyl-L-methionine = 2-methylsulfanyl-N(6)-dimethylallyladenosine(37) in tRNA + (sulfur carrier)-H + 5'-deoxyadenosine + L-methionine + A + S-adenosyl-L-homocysteine + 2 H(+). Its function is as follows. Catalyzes the methylthiolation of N6-(dimethylallyl)adenosine (i(6)A), leading to the formation of 2-methylthio-N6-(dimethylallyl)adenosine (ms(2)i(6)A) at position 37 in tRNAs that read codons beginning with uridine. The protein is tRNA-2-methylthio-N(6)-dimethylallyladenosine synthase of Myxococcus xanthus (strain DK1622).